A 349-amino-acid polypeptide reads, in one-letter code: DNA replication and repair protein RecF (349 aa).

29–36 (GLNGVGKT) is an ATP binding site.

The protein belongs to the RecF family.

It localises to the cytoplasm. Functionally, the RecF protein is involved in DNA metabolism; it is required for DNA replication and normal SOS inducibility. RecF binds preferentially to single-stranded, linear DNA. It also seems to bind ATP. The chain is DNA replication and repair protein RecF from Acholeplasma laidlawii (strain PG-8A).